We begin with the raw amino-acid sequence, 250 residues long: 5-oxoprolinase subunit A 2 (250 aa).

The protein belongs to the LamB/PxpA family. Forms a complex composed of PxpA, PxpB and PxpC.

The enzyme catalyses 5-oxo-L-proline + ATP + 2 H2O = L-glutamate + ADP + phosphate + H(+). Its function is as follows. Catalyzes the cleavage of 5-oxoproline to form L-glutamate coupled to the hydrolysis of ATP to ADP and inorganic phosphate. The polypeptide is 5-oxoprolinase subunit A 2 (Bordetella bronchiseptica (strain ATCC BAA-588 / NCTC 13252 / RB50) (Alcaligenes bronchisepticus)).